A 72-amino-acid polypeptide reads, in one-letter code: UPF0352 protein Patl_3379 (72 aa).

This sequence belongs to the UPF0352 family.

This is UPF0352 protein Patl_3379 from Pseudoalteromonas atlantica (strain T6c / ATCC BAA-1087).